The chain runs to 175 residues: UPF0398 protein SPP_0409 (175 aa).

This sequence belongs to the UPF0398 family.

The protein is UPF0398 protein SPP_0409 of Streptococcus pneumoniae (strain P1031).